A 205-amino-acid chain; its full sequence is Arginine exporter protein ArgO (205 aa).

The next 6 helical transmembrane spans lie at 1–21, 37–57, 68–88, 112–132, 147–167, and 182–202; these read MLAV…PLGP, LMVA…GIFG, LLAL…WGAF, VVTM…TFVV, WFAL…ALLA, and IINT…AWQG.

The protein belongs to the LysE/ArgO transporter (TC 2.A.75) family.

It is found in the cell inner membrane. It carries out the reaction L-arginine(in) = L-arginine(out). Functionally, involved in the export of arginine. Important to control the intracellular level of arginine and the correct balance between arginine and lysine. The protein is Arginine exporter protein ArgO of Serratia proteamaculans (strain 568).